The primary structure comprises 160 residues: MSFNHFDDQGRAIMVDVSGKQPTLRTATAAATVAMKPETLADLLAGRTTKGDVLGVARLAGIAAAKKTPELIPLSHPLAIHHAAVDFETEPETGTITVKATVRAFERTGVEMEAMTSAAVAALTIYDMCKGADKGITIGDICLLFKEGGKSGTWQREEPA.

Substrate contacts are provided by residues 74-76 (LSH) and 112-113 (ME). D127 is a catalytic residue.

Belongs to the MoaC family. As to quaternary structure, homohexamer; trimer of dimers.

The enzyme catalyses (8S)-3',8-cyclo-7,8-dihydroguanosine 5'-triphosphate = cyclic pyranopterin phosphate + diphosphate. It participates in cofactor biosynthesis; molybdopterin biosynthesis. In terms of biological role, catalyzes the conversion of (8S)-3',8-cyclo-7,8-dihydroguanosine 5'-triphosphate to cyclic pyranopterin monophosphate (cPMP). In Geobacter metallireducens (strain ATCC 53774 / DSM 7210 / GS-15), this protein is Cyclic pyranopterin monophosphate synthase.